A 619-amino-acid polypeptide reads, in one-letter code: 1-deoxy-D-xylulose-5-phosphate synthase (619 aa).

Thiamine diphosphate is bound by residues His-80 and 121–123; that span reads GHS. Asp-152 contributes to the Mg(2+) binding site. Residues 153-154, Asn-181, Tyr-288, and Glu-370 each bind thiamine diphosphate; that span reads GA. Asn-181 serves as a coordination point for Mg(2+).

It belongs to the transketolase family. DXPS subfamily. In terms of assembly, homodimer. The cofactor is Mg(2+). It depends on thiamine diphosphate as a cofactor.

The enzyme catalyses D-glyceraldehyde 3-phosphate + pyruvate + H(+) = 1-deoxy-D-xylulose 5-phosphate + CO2. The protein operates within metabolic intermediate biosynthesis; 1-deoxy-D-xylulose 5-phosphate biosynthesis; 1-deoxy-D-xylulose 5-phosphate from D-glyceraldehyde 3-phosphate and pyruvate: step 1/1. Catalyzes the acyloin condensation reaction between C atoms 2 and 3 of pyruvate and glyceraldehyde 3-phosphate to yield 1-deoxy-D-xylulose-5-phosphate (DXP). This is 1-deoxy-D-xylulose-5-phosphate synthase from Yersinia pestis (strain Pestoides F).